The following is a 298-amino-acid chain: ADP/ATP translocase 2 (298 aa).

The residue at position 1 (Met-1) is an N-acetylmethionine. Over 1-7 (MTDAAVS) the chain is Mitochondrial intermembrane. Thr-2 is subject to N-acetylthreonine; in ADP/ATP translocase 2, N-terminally processed. The Solcar 1 repeat unit spans residues 6–98 (VSFAKDFLAG…FAFKDKYKQI (93 aa)). Position 7 is a phosphoserine (Ser-7). A helical transmembrane segment spans residues 8-37 (FAKDFLAGGVAAAISKTAVAPIERVKLLLQ). Lys-23 carries the N6-malonyllysine modification. At 38–74 (VQHASKQITADKQYKGIMDCVVRIPKEQGVLSFWRGN) the chain is on the mitochondrial matrix side. Lys-43 is subject to N6-succinyllysine. The residue at position 52 (Lys-52) is an N6,N6,N6-trimethyllysine; alternate. At Lys-52 the chain carries N6,N6-dimethyllysine; alternate. Position 52 is an N6-methyllysine; alternate (Lys-52). A helical membrane pass occupies residues 75–99 (LANVIRYFPTQALNFAFKDKYKQIF). Arg-80 and Lys-92 together coordinate ADP. N6-malonyllysine occurs at positions 92 and 96. Residues 100-109 (LGGVDKRTQF) lie on the Mitochondrial intermembrane side of the membrane. The residue at position 105 (Lys-105) is an N6-acetyllysine; alternate. Lys-105 is modified (N6-succinyllysine; alternate). The helical transmembrane segment at 110–130 (WRYFAGNLASGGAAGATSLCF) threads the bilayer. 2 Solcar repeats span residues 111–201 (RYFA…AKGM) and 212–297 (ISWM…IKKY). At 131–178 (VYPLDFARTRLAADVGKAGDAREFKGLGDCLVKITKSDGIRGLYQGFN) the chain is on the mitochondrial matrix side. N6-methyllysine; alternate is present on Lys-147. N6-acetyllysine; alternate occurs at positions 147 and 155. N6-succinyllysine; alternate occurs at positions 147 and 155. Lys-147 carries the N6-malonyllysine; alternate modification. 2 positions are modified to N6-acetyllysine: Lys-163 and Lys-166. A helical transmembrane segment spans residues 179–199 (VSVQGIIIYRAAYFGIYDTAK). Over 200-210 (GMLPDPKNTHI) the chain is Mitochondrial intermembrane. The chain crosses the membrane as a helical span at residues 211–231 (FISWMIAQSVTAVAGLTSYPF). At 232 to 273 (DTVRRRMMMQSGRKGSDIMYTGTIDCWKKIARDEGSKAFFKG) the chain is on the mitochondrial matrix side. Arg-235 lines the ADP pocket. The important for transport activity stretch occupies residues 235-240 (RRRMMM). The Nucleotide carrier signature motif motif lies at 235-240 (RRRMMM). Lys-268 is subject to N6-acetyllysine; alternate. At Lys-268 the chain carries N6-succinyllysine; alternate. The helical transmembrane segment at 274–291 (AWSNVLRGMGGAFVLVLY) threads the bilayer. The Mitochondrial intermembrane segment spans residues 292–298 (DEIKKYT).

This sequence belongs to the mitochondrial carrier (TC 2.A.29) family. Monomer. Component of the MMXD complex, which includes CIAO1, ERCC2, CIAO2B, MMS19 and SLC25A5/ANT2. Interacts with AK4. Interacts with TIMM44; leading to inhibit the presequence translocase TIMM23, thereby promoting stabilization of PINK1. Trimethylated by ANTKMT at Lys-52.

The protein resides in the mitochondrion inner membrane. Its subcellular location is the membrane. It catalyses the reaction ADP(in) + ATP(out) = ADP(out) + ATP(in). The enzyme catalyses H(+)(in) = H(+)(out). Its activity is regulated as follows. The matrix-open state (m-state) is inhibited by the membrane-permeable bongkrekic acid (BKA). The cytoplasmic-open state (c-state) is inhibited by the membrane-impermeable toxic inhibitor carboxyatractyloside (CATR). Proton transporter activity is inhibited by ADP:ATP antiporter activity. Its function is as follows. ADP:ATP antiporter that mediates import of ADP into the mitochondrial matrix for ATP synthesis, and export of ATP out to fuel the cell. Cycles between the cytoplasmic-open state (c-state) and the matrix-open state (m-state): operates by the alternating access mechanism with a single substrate-binding site intermittently exposed to either the cytosolic (c-state) or matrix (m-state) side of the inner mitochondrial membrane. In addition to its ADP:ATP antiporter activity, also involved in mitochondrial uncoupling and mitochondrial permeability transition pore (mPTP) activity. Plays a role in mitochondrial uncoupling by acting as a proton transporter: proton transport uncouples the proton flows via the electron transport chain and ATP synthase to reduce the efficiency of ATP production and cause mitochondrial thermogenesis. Proton transporter activity is inhibited by ADP:ATP antiporter activity, suggesting that SLC25A5/ANT2 acts as a master regulator of mitochondrial energy output by maintaining a delicate balance between ATP production (ADP:ATP antiporter activity) and thermogenesis (proton transporter activity). Proton transporter activity requires free fatty acids as cofactor, but does not transport it. Probably mediates mitochondrial uncoupling in tissues that do not express UCP1. Also plays a key role in mPTP opening, a non-specific pore that enables free passage of the mitochondrial membranes to solutes of up to 1.5 kDa, and which contributes to cell death. It is however unclear if SLC25A5/ANT2 constitutes a pore-forming component of mPTP or regulates it. Acts as a regulator of mitophagy independently of ADP:ATP antiporter activity: promotes mitophagy via interaction with TIMM44, leading to inhibit the presequence translocase TIMM23, thereby promoting stabilization of PINK1. As part of the mitotic spindle-associated MMXD complex it may play a role in chromosome segregation. The polypeptide is ADP/ATP translocase 2 (Tachyglossus aculeatus aculeatus (Southeast Australian short-beaked echidna)).